Consider the following 782-residue polypeptide: Ribosome biogenesis protein ERB1 (782 aa).

Over residues M1–A11 the composition is skewed to basic residues. The tract at residues M1–K120 is disordered. Composition is skewed to acidic residues over residues D39–D51 and L59–E75. Positions R82–Q92 are enriched in polar residues. Positions G106–E117 are enriched in acidic residues. 2 WD repeats span residues G432 to N471 and S475 to E516. The interval K533–R556 is disordered. WD repeat units lie at residues R612–Q652, P653–K692, F696–E736, and K752–N782.

Belongs to the WD repeat BOP1/ERB1 family. In terms of assembly, component of the NOP7 complex, composed of ERB1, NOP7 and YTM1. The complex is held together by ERB1, which interacts with NOP7 via its N-terminal domain and with YTM1 via a high-affinity interaction between the seven-bladed beta-propeller domains of the 2 proteins. The NOP7 complex associates with the 66S pre-ribosome.

The protein localises to the nucleus. Its subcellular location is the nucleolus. The protein resides in the nucleoplasm. Functionally, component of the NOP7 complex, which is required for maturation of the 25S and 5.8S ribosomal RNAs and formation of the 60S ribosome. The sequence is that of Ribosome biogenesis protein ERB1 from Phaeosphaeria nodorum (strain SN15 / ATCC MYA-4574 / FGSC 10173) (Glume blotch fungus).